The sequence spans 374 residues: Transcription factor IIIA (374 aa).

7 consecutive C2H2-type zinc fingers follow at residues 23 to 47, 53 to 77, 83 to 107, 113 to 138, 144 to 169, 204 to 226, and 236 to 261; these read FHCP…LRTH, FVCD…KRCH, FSCH…IEVH, YACT…SACH, YPCT…NRAH, PSCS…VVLH, and YHCP…SVIH. Residues 267-291 form a C2H2-type 8; atypical zinc finger; it reads FHCDSCGTKFGYKHMLQRHLERGTC. The C2H2-type 9 zinc-finger motif lies at 349-374; it reads YSCSFPECNYRFKRLYDMHRHLNSHH.

It is found in the nucleus. In terms of biological role, is required for correct transcription of 5S RNA genes by RNA polymerase III. Also binds the transcribed 5S RNA's. Initiates transcription of the 5S ribosomal RNA gene. This Schizosaccharomyces pombe (strain 972 / ATCC 24843) (Fission yeast) protein is Transcription factor IIIA (sfc2).